The primary structure comprises 70 residues: Small ribosomal subunit protein bS21 (70 aa).

The protein belongs to the bacterial ribosomal protein bS21 family.

The polypeptide is Small ribosomal subunit protein bS21 (Delftia acidovorans (strain DSM 14801 / SPH-1)).